A 427-amino-acid chain; its full sequence is Serine--tRNA ligase (427 aa).

231 to 233 is a binding site for L-serine; that stretch reads TAE. ATP is bound at residue 262–264; it reads RSE. Glu-285 is a binding site for L-serine. ATP is bound at residue 349–352; that stretch reads EISS. Ser-385 provides a ligand contact to L-serine.

It belongs to the class-II aminoacyl-tRNA synthetase family. Type-1 seryl-tRNA synthetase subfamily. As to quaternary structure, homodimer. The tRNA molecule binds across the dimer.

It is found in the cytoplasm. It catalyses the reaction tRNA(Ser) + L-serine + ATP = L-seryl-tRNA(Ser) + AMP + diphosphate + H(+). The catalysed reaction is tRNA(Sec) + L-serine + ATP = L-seryl-tRNA(Sec) + AMP + diphosphate + H(+). It functions in the pathway aminoacyl-tRNA biosynthesis; selenocysteinyl-tRNA(Sec) biosynthesis; L-seryl-tRNA(Sec) from L-serine and tRNA(Sec): step 1/1. Functionally, catalyzes the attachment of serine to tRNA(Ser). Is also able to aminoacylate tRNA(Sec) with serine, to form the misacylated tRNA L-seryl-tRNA(Sec), which will be further converted into selenocysteinyl-tRNA(Sec). The sequence is that of Serine--tRNA ligase from Hahella chejuensis (strain KCTC 2396).